Reading from the N-terminus, the 268-residue chain is Putative hydro-lyase A1S_1268 (268 aa).

This sequence belongs to the D-glutamate cyclase family.

The protein is Putative hydro-lyase A1S_1268 of Acinetobacter baumannii (strain ATCC 17978 / DSM 105126 / CIP 53.77 / LMG 1025 / NCDC KC755 / 5377).